A 180-amino-acid polypeptide reads, in one-letter code: Large ribosomal subunit protein uL5 (180 aa).

Belongs to the universal ribosomal protein uL5 family. In terms of assembly, part of the 50S ribosomal subunit; part of the 5S rRNA/L5/L18/L25 subcomplex. Contacts the 5S rRNA and the P site tRNA. Forms a bridge to the 30S subunit in the 70S ribosome.

This is one of the proteins that bind and probably mediate the attachment of the 5S RNA into the large ribosomal subunit, where it forms part of the central protuberance. In the 70S ribosome it contacts protein S13 of the 30S subunit (bridge B1b), connecting the 2 subunits; this bridge is implicated in subunit movement. Contacts the P site tRNA; the 5S rRNA and some of its associated proteins might help stabilize positioning of ribosome-bound tRNAs. The chain is Large ribosomal subunit protein uL5 from Chlamydia abortus (strain DSM 27085 / S26/3) (Chlamydophila abortus).